Here is a 151-residue protein sequence, read N- to C-terminus: Ribosomal RNA large subunit methyltransferase H (151 aa).

Residues G100 and 119–124 each bind S-adenosyl-L-methionine; that span reads LSKMTF.

The protein belongs to the RNA methyltransferase RlmH family. As to quaternary structure, homodimer.

It is found in the cytoplasm. It catalyses the reaction pseudouridine(1915) in 23S rRNA + S-adenosyl-L-methionine = N(3)-methylpseudouridine(1915) in 23S rRNA + S-adenosyl-L-homocysteine + H(+). Its function is as follows. Specifically methylates the pseudouridine at position 1915 (m3Psi1915) in 23S rRNA. The polypeptide is Ribosomal RNA large subunit methyltransferase H (Thermotoga maritima (strain ATCC 43589 / DSM 3109 / JCM 10099 / NBRC 100826 / MSB8)).